We begin with the raw amino-acid sequence, 315 residues long: THO complex subunit 3 (315 aa).

WD repeat units follow at residues 18 to 57, 64 to 104, 106 to 145, 189 to 228, 231 to 270, and 272 to 311; these read GHKK…HSKA, GHTD…CTQQ, ELSG…PLHR, AHTA…CLRT, KLEW…TVHQ, and PCRA…RIFG.

Belongs to the THOC3 family. Component of the THO complex, which is composed of THO1, THO2, THO3, THO5, THO6 and THO7.

Its subcellular location is the nucleus. Its function is as follows. Acts as a component of the THO subcomplex of the TREX complex which is thought to couple mRNA transcription, processing and nuclear export. Contributes to the integrity of the endogenous trans-acting small interfering RNA (ta-siRNA) pathway. May process or transport a long RNA molecule so that it can be a template for secondary siRNA production. May participate in the trafficking of siRNA precursors to the ARGONAUTE catalytic center. Required for the generation of functional messenger ribonucleoproteins (mRNPs). This chain is THO complex subunit 3 (THO3), found in Arabidopsis thaliana (Mouse-ear cress).